Reading from the N-terminus, the 140-residue chain is 3-hydroxyacyl-[acyl-carrier-protein] dehydratase FabZ (140 aa).

His48 is a catalytic residue.

This sequence belongs to the thioester dehydratase family. FabZ subfamily.

The protein resides in the cytoplasm. The enzyme catalyses a (3R)-hydroxyacyl-[ACP] = a (2E)-enoyl-[ACP] + H2O. Its function is as follows. Involved in unsaturated fatty acids biosynthesis. Catalyzes the dehydration of short chain beta-hydroxyacyl-ACPs and long chain saturated and unsaturated beta-hydroxyacyl-ACPs. In Latilactobacillus sakei subsp. sakei (strain 23K) (Lactobacillus sakei subsp. sakei), this protein is 3-hydroxyacyl-[acyl-carrier-protein] dehydratase FabZ.